Consider the following 401-residue polypeptide: LL-diaminopimelate aminotransferase (401 aa).

2 residues coordinate substrate: Tyr-15 and Gly-42. Pyridoxal 5'-phosphate is bound by residues Tyr-72, 108 to 109, Tyr-132, Asn-176, Tyr-207, and 235 to 237; these read AK and SFS. Substrate-binding residues include Lys-109, Tyr-132, and Asn-176. Position 238 is an N6-(pyridoxal phosphate)lysine (Lys-238). Arg-246 and Asn-281 together coordinate pyridoxal 5'-phosphate. The substrate site is built by Asn-281 and Arg-377.

Belongs to the class-I pyridoxal-phosphate-dependent aminotransferase family. LL-diaminopimelate aminotransferase subfamily. In terms of assembly, homodimer. It depends on pyridoxal 5'-phosphate as a cofactor.

The catalysed reaction is (2S,6S)-2,6-diaminopimelate + 2-oxoglutarate = (S)-2,3,4,5-tetrahydrodipicolinate + L-glutamate + H2O + H(+). It participates in amino-acid biosynthesis; L-lysine biosynthesis via DAP pathway; LL-2,6-diaminopimelate from (S)-tetrahydrodipicolinate (aminotransferase route): step 1/1. In terms of biological role, involved in the synthesis of meso-diaminopimelate (m-DAP or DL-DAP), required for both lysine and peptidoglycan biosynthesis. Catalyzes the direct conversion of tetrahydrodipicolinate to LL-diaminopimelate. The sequence is that of LL-diaminopimelate aminotransferase from Azobacteroides pseudotrichonymphae genomovar. CFP2.